Here is a 299-residue protein sequence, read N- to C-terminus: Acetyl-hydrolase (299 aa).

The Involved in the stabilization of the negatively charged intermediate by the formation of the oxyanion hole motif lies at 73-75 (HGG). Active-site residues include Ser-143, Glu-237, and His-267.

Belongs to the 'GDXG' lipolytic enzyme family.

Its pathway is secondary metabolite biosynthesis; bialaphos biosynthesis. This protein removes the N-acetyl group from bialaphos as one of the final steps of biosynthesis of phosphinothricin tripeptide (PTT), also known as bialaphos (BA), a natural-product antibiotic and potent herbicide. In Streptomyces hygroscopicus, this protein is Acetyl-hydrolase (bah).